A 751-amino-acid polypeptide reads, in one-letter code: Ecdysteroid-phosphate phosphatase (751 aa).

Positions 16-60 constitute a UBA domain; the sequence is CISKQHLTPLQTLLQMGFPRHRAEKALASTGNRGVQIASDWLLAH. In terms of domain architecture, SH3 spans 271 to 336; that stretch reads ATKQVQKVVY…PVNYTERTAE (66 aa). Disordered stretches follow at residues 367–394 and 458–484; these read GRSI…FEES and EPPA…PGSL. Residues 466 to 479 show a composition bias toward basic and acidic residues; sequence RPDDTLSVHSDHSL. Residues 490-751 form a phosphatase-like region; that stretch reads KNRKIYIMRH…RFEWNALSAT (262 aa). The active site involves Arg-498. His-499 functions as the Tele-phosphohistidine intermediate in the catalytic mechanism. His-681 is an active-site residue.

Its subcellular location is the cytoplasm. It localises to the cytosol. The protein resides in the nucleus. The catalysed reaction is ecdysone 22-phosphate + H2O = ecdysone + phosphate. It catalyses the reaction 20-hydroxyecdysone 22-phosphate + H2O = 20-hydroxyecdysone + phosphate. It carries out the reaction 2-deoxyecdysone 22-phosphate + H2O = 2-deoxyecdysone + phosphate. Its function is as follows. Steroid phosphatase that dephosphorylates ecdysteroids such as ecdysone 22-phosphate (E22P), 3-epi-ecdysone 22-phosphate (E22P) and 3-epi-ecdysone 2-phosphate (E2P). Likely catalyzes the conversion of inactive phosphorylated ecdysteroids into their active forms. Shows high activity towards ecdysone 22-phosphate (E22P), but is also significantly active against 3-epi-ecdysone 22-phosphate (E22P) and 3-epi-ecdysone 2-phosphate (E2P). Also displays acid phosphatase activity towards 4-nitrophenyl phosphate (pNNP) in vitro. Has no activity towards 3-epi-ecdysone 3-phosphate (E3P). The sequence is that of Ecdysteroid-phosphate phosphatase from Drosophila melanogaster (Fruit fly).